The sequence spans 248 residues: Probable 2-oxo-3-(5-oxofuran-2-ylidene)propanoate lactonase (248 aa).

Active-site residues include Cys-123, Asp-180, and His-212.

The protein belongs to the dienelactone hydrolase family.

It carries out the reaction 2-oxo-3-(5-oxofuran-2-ylidene)propanoate + H2O = 3-maleylpyruvate + H(+). Involved in the 5-nitroanthranilic acid (5NAA) degradation. Catalyzes the hydrolysis of the lactone to produce maleylpyruvate biodegradation of 5-nitroanthranilate. This Bradyrhizobium sp protein is Probable 2-oxo-3-(5-oxofuran-2-ylidene)propanoate lactonase (naaC).